Consider the following 548-residue polypeptide: CTP synthase (548 aa).

Residues 1 to 276 (MPTELTDYDP…DQYVMEQLGL (276 aa)) form an amidoligase domain region. Residue Ser25 participates in CTP binding. Ser25 provides a ligand contact to UTP. ATP is bound at residue 26 to 31 (GLGKGI). L-glutamine is bound at residue Tyr66. Asp83 contributes to the ATP binding site. 2 residues coordinate Mg(2+): Asp83 and Glu151. Residues 158–160 (DIE), 197–202 (KTKPTQ), and Lys233 contribute to the CTP site. UTP is bound by residues 197–202 (KTKPTQ) and Lys233. Residues 303–541 (DIALVGKYAM…VETILETTDT (239 aa)) form the Glutamine amidotransferase type-1 domain. Gly363 serves as a coordination point for L-glutamine. The Nucleophile; for glutamine hydrolysis role is filled by Cys390. L-glutamine-binding positions include 391 to 394 (LGFQ), Glu414, and Arg471. Catalysis depends on residues His514 and Glu516.

This sequence belongs to the CTP synthase family. Homotetramer.

It carries out the reaction UTP + L-glutamine + ATP + H2O = CTP + L-glutamate + ADP + phosphate + 2 H(+). The enzyme catalyses L-glutamine + H2O = L-glutamate + NH4(+). It catalyses the reaction UTP + NH4(+) + ATP = CTP + ADP + phosphate + 2 H(+). Its pathway is pyrimidine metabolism; CTP biosynthesis via de novo pathway; CTP from UDP: step 2/2. Allosterically activated by GTP, when glutamine is the substrate; GTP has no effect on the reaction when ammonia is the substrate. The allosteric effector GTP functions by stabilizing the protein conformation that binds the tetrahedral intermediate(s) formed during glutamine hydrolysis. Inhibited by the product CTP, via allosteric rather than competitive inhibition. Functionally, catalyzes the ATP-dependent amination of UTP to CTP with either L-glutamine or ammonia as the source of nitrogen. Regulates intracellular CTP levels through interactions with the four ribonucleotide triphosphates. The protein is CTP synthase of Natronomonas pharaonis (strain ATCC 35678 / DSM 2160 / CIP 103997 / JCM 8858 / NBRC 14720 / NCIMB 2260 / Gabara) (Halobacterium pharaonis).